Consider the following 1087-residue polypeptide: Exoglucanase XynX (1087 aa).

An N-terminal signal peptide occupies residues 1–30; it reads MKNNLSKFVSIFTAFIMIFGTSLFFPHVSA. The region spanning 37–188 is the CBM-cenC domain; the sequence is ANLVSNGDFE…YIDDVVVTPQ (152 aa). Residues 204 to 527 enclose the GH10 domain; the sequence is QNDIPDLSSV…KPAYWAIADP (324 aa). The active-site Proton donor is the E347. D389 is a catalytic residue. E452 (nucleophile) is an active-site residue. 3 consecutive SLH domains span residues 903–966, 967–1025, and 1028–1087; these read KKSV…YNGE, FSDV…KEEN, and ATSF…SNNL.

This sequence belongs to the glycosyl hydrolase 10 (cellulase F) family.

It carries out the reaction Hydrolysis of (1-&gt;4)-beta-D-glucosidic linkages in cellulose and cellotetraose, releasing cellobiose from the non-reducing ends of the chains.. In Acetivibrio thermocellus (Hungateiclostridium thermocellum), this protein is Exoglucanase XynX (xynX).